Reading from the N-terminus, the 115-residue chain is T cell receptor beta variable 11-1 (115 aa).

The N-terminal stretch at 1–21 (MSTRLLCWMALCLLGAELSEA) is a signal peptide. In terms of domain architecture, Ig-like spans 22-115 (EVAQSPRYKI…SAMYLCASSL (94 aa)). Cys42 and Cys111 are oxidised to a cystine.

Alpha-beta TR is a heterodimer composed of an alpha and beta chain; disulfide-linked. The alpha-beta TR is associated with the transmembrane signaling CD3 coreceptor proteins to form the TR-CD3 (TcR or TCR). The assembly of alpha-beta TR heterodimers with CD3 occurs in the endoplasmic reticulum where a single alpha-beta TR heterodimer associates with one CD3D-CD3E heterodimer, one CD3G-CD3E heterodimer and one CD247 homodimer forming a stable octameric structure. CD3D-CD3E and CD3G-CD3E heterodimers preferentially associate with TR alpha and TR beta chains, respectively. The association of the CD247 homodimer is the last step of TcR assembly in the endoplasmic reticulum and is required for transport to the cell surface.

It is found in the cell membrane. V region of the variable domain of T cell receptor (TR) beta chain that participates in the antigen recognition. Alpha-beta T cell receptors are antigen specific receptors which are essential to the immune response and are present on the cell surface of T lymphocytes. Recognize peptide-major histocompatibility (MH) (pMH) complexes that are displayed by antigen presenting cells (APC), a prerequisite for efficient T cell adaptive immunity against pathogens. Binding of alpha-beta TR to pMH complex initiates TR-CD3 clustering on the cell surface and intracellular activation of LCK that phosphorylates the ITAM motifs of CD3G, CD3D, CD3E and CD247 enabling the recruitment of ZAP70. In turn ZAP70 phosphorylates LAT, which recruits numerous signaling molecules to form the LAT signalosome. The LAT signalosome propagates signal branching to three major signaling pathways, the calcium, the mitogen-activated protein kinase (MAPK) kinase and the nuclear factor NF-kappa-B (NF-kB) pathways, leading to the mobilization of transcription factors that are critical for gene expression and essential for T cell growth and differentiation. The T cell repertoire is generated in the thymus, by V-(D)-J rearrangement. This repertoire is then shaped by intrathymic selection events to generate a peripheral T cell pool of self-MH restricted, non-autoaggressive T cells. Post-thymic interaction of alpha-beta TR with the pMH complexes shapes TR structural and functional avidity. In Homo sapiens (Human), this protein is T cell receptor beta variable 11-1.